We begin with the raw amino-acid sequence, 419 residues long: Inner ear-specific collagen (419 aa).

The signal sequence occupies residues 1-19; it reads MDAYSLSPTDSTTYSSDTF. A nonhelical region (NC2) region spans residues 20-57; sequence STEFHTDAIAPPGNTPGNYTLDYNECFFNFCECCPPEK. Asn37 carries an N-linked (GlcNAc...) asparagine glycan. The tract at residues 58 to 274 is triple-helical region (COL1); it reads GPMGPMGERG…RGPKGPPGES (217 aa). Residues 63–275 are disordered; it reads MGERGLPGPP…GPKGPPGESV (213 aa). Basic and acidic residues-rich tracts occupy residues 129–144 and 184–202; these read PGEK…KGER and LKGE…KGER. The span at 227-236 shows a compositional bias: gly residues; it reads GPLGGKGDTG. Residues 275-412 form the C1q domain; sequence VEQIRSAFSV…GFLLYPDTKK (138 aa). The interval 275-419 is nonhelical region (NC1); sequence VEQIRSAFSV…TKKPTAMENL (145 aa). N-linked (GlcNAc...) asparagine glycosylation occurs at Asn320.

In terms of tissue distribution, specialized secretory supporting cells at the outer perimeter of the saccular epithelium.

It is found in the secreted. The protein resides in the extracellular space. The protein localises to the extracellular matrix. Forms a microstructural matrix within the otolithic membrane. This is Inner ear-specific collagen from Lepomis macrochirus (Bluegill).